Here is a 231-residue protein sequence, read N- to C-terminus: Urease accessory protein UreE (231 aa).

Residues 185–231 form a disordered region; the sequence is VASPLDEPHGSGLHIHGIHSHEEGHSHGDHDHDHSHSHGDHDHDHKH. A compositionally biased stretch (basic and acidic residues) spans 203–231; that stretch reads HSHEEGHSHGDHDHDHSHSHGDHDHDHKH.

Belongs to the UreE family.

The protein resides in the cytoplasm. Functionally, involved in urease metallocenter assembly. Binds nickel. Probably functions as a nickel donor during metallocenter assembly. The polypeptide is Urease accessory protein UreE (Yersinia pestis bv. Antiqua (strain Antiqua)).